A 466-amino-acid chain; its full sequence is Ornithine decarboxylase (466 aa).

Lysine 116 is modified (N6-(pyridoxal phosphate)lysine). Pyridoxal 5'-phosphate is bound by residues serine 247, glycine 286, and 318–321 (EPGR). 362 to 363 (FD) serves as a coordination point for substrate. Residue cysteine 411 is the Proton donor; shared with dimeric partner of the active site. Residue aspartate 412 coordinates substrate. Residue tyrosine 441 participates in pyridoxal 5'-phosphate binding.

Belongs to the Orn/Lys/Arg decarboxylase class-II family. In terms of assembly, homodimer. Only the dimer is catalytically active, as the active sites are constructed of residues from both monomers. Pyridoxal 5'-phosphate serves as cofactor.

The protein localises to the cytoplasm. It carries out the reaction L-ornithine + H(+) = putrescine + CO2. It functions in the pathway amine and polyamine biosynthesis; putrescine biosynthesis via L-ornithine pathway; putrescine from L-ornithine: step 1/1. Its activity is regulated as follows. Inhibited by antizyme (AZ) OAZ1 in response to polyamine levels. AZ inhibits the assembly of the functional homodimer by binding to ODC monomers and targeting them for ubiquitin-independent proteolytic destruction by the 26S proteasome. Catalyzes the first and rate-limiting step of polyamine biosynthesis that converts ornithine into putrescine, which is the precursor for the polyamines, spermidine and spermine. Polyamines are essential for cell proliferation and are implicated in cellular processes, ranging from DNA replication to apoptosis. The polypeptide is Ornithine decarboxylase (Saccharomyces cerevisiae (strain ATCC 204508 / S288c) (Baker's yeast)).